A 195-amino-acid chain; its full sequence is Probable septum site-determining protein MinC (195 aa).

It belongs to the MinC family. Interacts with MinD and FtsZ.

In terms of biological role, cell division inhibitor that blocks the formation of polar Z ring septums. Rapidly oscillates between the poles of the cell to destabilize FtsZ filaments that have formed before they mature into polar Z rings. Prevents FtsZ polymerization. The chain is Probable septum site-determining protein MinC from Helicobacter pylori (strain P12).